The sequence spans 546 residues: Chaperonin GroEL (546 aa).

ATP is bound by residues 30-33 (TLGP), K51, 87-91 (DGTTT), G415, 479-481 (NAA), and D495.

The protein belongs to the chaperonin (HSP60) family. In terms of assembly, forms a cylinder of 14 subunits composed of two heptameric rings stacked back-to-back. Interacts with the co-chaperonin GroES.

It is found in the cytoplasm. It catalyses the reaction ATP + H2O + a folded polypeptide = ADP + phosphate + an unfolded polypeptide.. Its function is as follows. Together with its co-chaperonin GroES, plays an essential role in assisting protein folding. The GroEL-GroES system forms a nano-cage that allows encapsulation of the non-native substrate proteins and provides a physical environment optimized to promote and accelerate protein folding. The sequence is that of Chaperonin GroEL from Pseudomonas putida (strain ATCC 700007 / DSM 6899 / JCM 31910 / BCRC 17059 / LMG 24140 / F1).